The following is a 543-amino-acid chain: ATP-dependent ubiquitin transferase-like protein Cap2 (543 aa).

Residues 1–159 are E2-like domain; sequence MSSAAAVADV…QNCIVAHANG (159 aa). Cysteine 84 functions as the For E2-like domain in the catalytic mechanism. Residues 160 to 305 form a linker domain region; it reads CPLWFITDNE…YLAQRNMPNS (146 aa). The segment at 306–543 is adenylation plus E1-like domain; it reads KTLAGKNIAV…RDRECPLCNS (238 aa). Active-site for E1-like domain residues include cysteine 450 and cysteine 453.

In the C-terminal section; belongs to the HesA/MoeB/ThiF family. Forms a Cap2-CdnA complex. A Cap2 dimer is bound on either side by a CdnA monomer.

CD-NTase priming component of a CBASS antiviral system. CBASS (cyclic oligonucleotide-based antiphage signaling system) provides immunity against bacteriophages. The CD-NTase protein (CdnA) synthesizes cyclic nucleotides in response to infection; these serve as specific second messenger signals. The signals activate a diverse range of effectors, leading to bacterial cell death and thus abortive phage infection. A type II-A(GA) CBASS system. Functionally, acts as a protein transferase, conjugating CdnA, the CD-NTase, to unidentified target(s) in the cell probably via an E1-E2 ubiquitin transferase-like mechanism. This primes CdnA, upon phage infection CdnA activates and makes cyclic nucleotides. Protein conjugation requires ATP. In terms of biological role, the capV-cdnA-cap2-cap3 operon provides about 10(4)-fold protection in strain BWHPSA011 against infection by phage PaMx41. In P.aeruginosa strain PAO1 it confers protection against phages PaMx41 and JBD18 but not JBD67 (JBD18 and JBD67 do not replicate in BWHPSA011 / Pa011). When acb2 in JBD67 is deleted this CBASS operon then protects against JDB67 also. This CBASS system limits prophage induction of lysogenized JBD67 as well as viral lytic replication. The polypeptide is ATP-dependent ubiquitin transferase-like protein Cap2 (Pseudomonas aeruginosa (strain BWHPSA011 / Pa011)).